Reading from the N-terminus, the 199-residue chain is MLVLGLTGSIGMGKSTTAKLFGEAGVPVYDADATVHQIYEGEAVPAIEAAFPGTTVDGKVDRALLSEKVVHDSDAMKRLEQIVHPMLRSHHQNFLDDAEASGAPVAVVDVPLLFETGGEKRVDAVVVVTTSPEVQRERILARENMTPEKLDAILARQMPDAEKRRRADFVVDTSHGLDPVRAQIREILDAAARMPRRRP.

The 197-residue stretch at 3-199 (VLGLTGSIGM…AAARMPRRRP (197 aa)) folds into the DPCK domain. 11–16 (GMGKST) contacts ATP.

The protein belongs to the CoaE family.

Its subcellular location is the cytoplasm. The enzyme catalyses 3'-dephospho-CoA + ATP = ADP + CoA + H(+). Its pathway is cofactor biosynthesis; coenzyme A biosynthesis; CoA from (R)-pantothenate: step 5/5. Functionally, catalyzes the phosphorylation of the 3'-hydroxyl group of dephosphocoenzyme A to form coenzyme A. The protein is Dephospho-CoA kinase of Rhodopseudomonas palustris (strain HaA2).